The primary structure comprises 325 residues: Beta-ketoacyl-[acyl-carrier-protein] synthase III (325 aa).

Catalysis depends on residues Cys119 and His252. Positions Gln253–Arg257 are ACP-binding. Residue Asn282 is part of the active site.

This sequence belongs to the thiolase-like superfamily. FabH family. In terms of assembly, homodimer.

The protein localises to the cytoplasm. The catalysed reaction is malonyl-[ACP] + acetyl-CoA + H(+) = 3-oxobutanoyl-[ACP] + CO2 + CoA. It functions in the pathway lipid metabolism; fatty acid biosynthesis. In terms of biological role, catalyzes the condensation reaction of fatty acid synthesis by the addition to an acyl acceptor of two carbons from malonyl-ACP. Catalyzes the first condensation reaction which initiates fatty acid synthesis and may therefore play a role in governing the total rate of fatty acid production. Possesses both acetoacetyl-ACP synthase and acetyl transacylase activities. Its substrate specificity determines the biosynthesis of branched-chain and/or straight-chain of fatty acids. This chain is Beta-ketoacyl-[acyl-carrier-protein] synthase III, found in Delftia acidovorans (strain DSM 14801 / SPH-1).